The primary structure comprises 620 residues: LEAF RUST 10 DISEASE-RESISTANCE LOCUS RECEPTOR-LIKE PROTEIN KINASE-like 2.3 (620 aa).

The signal sequence occupies residues 1–30; the sequence is MDSLSSMGFQTASFFLILLFLFYHLPCVPS. Residues 31–256 are Extracellular-facing; the sequence is QQERSRLCKP…NNGTYSDNRP (226 aa). N-linked (GlcNAc...) asparagine glycans are attached at residues N75, N85, N93, N132, N148, N162, N189, N231, and N248. Residues 257–277 form a helical membrane-spanning segment; it reads FLVTIGTVLGSILCVCVVLFL. Residues 278–620 lie on the Cytoplasmic side of the membrane; sequence AFYLNERRIA…SVESSIYSEV (343 aa). The Protein kinase domain maps to 314–596; that stretch reads KSFTEVVGRG…SLDPPPKPLL (283 aa). ATP is bound by residues 320–328 and K342; that span reads VGRGGFGTV. The active-site Proton acceptor is D431. The tract at residues 586 to 620 is disordered; sequence DSLDPPPKPLLHMPMQNNNAESSQLSVESSIYSEV. A compositionally biased stretch (polar residues) spans 600–620; the sequence is MQNNNAESSQLSVESSIYSEV.

Belongs to the protein kinase superfamily. Ser/Thr protein kinase family.

The protein localises to the membrane. It catalyses the reaction L-seryl-[protein] + ATP = O-phospho-L-seryl-[protein] + ADP + H(+). The catalysed reaction is L-threonyl-[protein] + ATP = O-phospho-L-threonyl-[protein] + ADP + H(+). The polypeptide is LEAF RUST 10 DISEASE-RESISTANCE LOCUS RECEPTOR-LIKE PROTEIN KINASE-like 2.3 (Arabidopsis thaliana (Mouse-ear cress)).